Consider the following 460-residue polypeptide: Elongation factor 1-alpha (460 aa).

G2 is modified (n,N,N-trimethylglycine). N6,N6-dimethyllysine; alternate is present on K3. Residue K3 is modified to N6-methyllysine; alternate. Residues 6 to 241 (KTHINLVVIG…DAIDPPTRPT (236 aa)) form the tr-type G domain. The G1 stretch occupies residues 15–22 (GHVDSGKS). 15 to 22 (GHVDSGKS) provides a ligand contact to GTP. N6-methyllysine is present on K31. Positions 71-75 (GITID) are G2. K80 is subject to N6,N6,N6-trimethyllysine. Residues 92-95 (DAPG) are G3. GTP-binding positions include 92 to 96 (DAPGH) and 154 to 157 (NKMD). Residues 154–157 (NKMD) form a G4 region. Residues 193 to 195 (SGF) are G5. K317 bears the N6,N6-dimethyllysine; alternate mark. K317 carries the N6-methyllysine; alternate modification. At K391 the chain carries N6-methyllysine.

This sequence belongs to the TRAFAC class translation factor GTPase superfamily. Classic translation factor GTPase family. EF-Tu/EF-1A subfamily.

The protein resides in the cytoplasm. This protein promotes the GTP-dependent binding of aminoacyl-tRNA to the A-site of ribosomes during protein biosynthesis. The sequence is that of Elongation factor 1-alpha (TEF) from Coccidioides immitis (strain RS) (Valley fever fungus).